A 168-amino-acid polypeptide reads, in one-letter code: Peptidoglycan-associated lipoprotein (168 aa).

An N-terminal signal peptide occupies residues 1–21 (MEMLKFGKFAALALAMAVAVG). A lipid anchor (N-palmitoyl cysteine) is attached at Cys22. Cys22 carries the S-diacylglycerol cysteine lipid modification. The 113-residue stretch at 56-168 (SDEAALRAIT…AQNRRVELKK (113 aa)) folds into the OmpA-like domain. A disordered region spans residues 147–168 (RPVATGHDEQSWAQNRRVELKK).

Belongs to the Pal lipoprotein family. The Tol-Pal system is composed of five core proteins: the inner membrane proteins TolA, TolQ and TolR, the periplasmic protein TolB and the outer membrane protein Pal. They form a network linking the inner and outer membranes and the peptidoglycan layer.

It is found in the cell outer membrane. In terms of biological role, part of the Tol-Pal system, which plays a role in outer membrane invagination during cell division and is important for maintaining outer membrane integrity. This is Peptidoglycan-associated lipoprotein from Pseudomonas aeruginosa (strain ATCC 15692 / DSM 22644 / CIP 104116 / JCM 14847 / LMG 12228 / 1C / PRS 101 / PAO1).